The sequence spans 417 residues: MQTILMAEGSGLDFTGEVPLSDFSKYLLDRVKQLEERNVRLKEEYRKIELEKKSVENKKVQYEREIRKLTSELDRLKTPPLIVGTILDVMANGKMIIKSSTGPKFVVNSSQFINSKEVYPGAKVALNQQSLAVIEVLPTVKDPSVLGMEVVDSPEIDYQSIGGLEAQINELKETVELPLLKPELFQKVGIEPPKGVLLYGPPGTGKTLLAKAVANRTKATFIRIIGSELVQKYIGEGARMVRELFELAKEKSPSIIFIDEIDSIGAKRLDSITSGDREVQRTLVQLLAEMDGFDPRGNVRILAATNRPDILDPALLRPGRFDRMIKVPMPTAEAREQILKIHARKMNLADDVDLRKIALITDESSGADLSAIVMEAGMFAIRNNRDVVDSSDFNAAVAKVMGERNRSMAQESGVMFA.

A coiled-coil region spans residues 24 to 78 (SKYLLDRVKQLEERNVRLKEEYRKIELEKKSVENKKVQYEREIRKLTSELDRLKT). ATP contacts are provided by residues 203 to 208 (GTGKTL) and histidine 342. Residues 415-417 (MFA) are docks into pockets in the proteasome alpha-ring to cause gate opening.

This sequence belongs to the AAA ATPase family. In terms of assembly, homohexamer. The hexameric complex has a two-ring architecture resembling a top hat that caps the 20S proteasome core at one or both ends. Upon ATP-binding, the C-terminus of PAN interacts with the alpha-rings of the proteasome core by binding to the intersubunit pockets.

The protein resides in the cytoplasm. In terms of biological role, ATPase which is responsible for recognizing, binding, unfolding and translocation of substrate proteins into the archaeal 20S proteasome core particle. Is essential for opening the gate of the 20S proteasome via an interaction with its C-terminus, thereby allowing substrate entry and access to the site of proteolysis. Thus, the C-termini of the proteasomal ATPase function like a 'key in a lock' to induce gate opening and therefore regulate proteolysis. Unfolding activity requires energy from ATP hydrolysis, whereas ATP binding alone promotes ATPase-20S proteasome association which triggers gate opening, and supports translocation of unfolded substrates. This Methanocella arvoryzae (strain DSM 22066 / NBRC 105507 / MRE50) protein is Proteasome-activating nucleotidase.